Consider the following 61-residue polypeptide: Cecropin-D (61 aa).

An N-terminal signal peptide occupies residues 1–22 (MKFSKIFVFVFAIVFATASVSA). The propeptide at 23 to 24 (AP) is removed by a dipeptidylpeptidase. Glutamine amide is present on Gln60.

It belongs to the cecropin family. In terms of tissue distribution, mainly in fat body. Lower in hemocytes. Not expressed in midguts, malpighian tubules and silk glands.

It localises to the secreted. Its function is as follows. Cecropins have lytic and antibacterial activity against several Gram-positive and Gram-negative bacteria. The protein is Cecropin-D (CECD) of Bombyx mori (Silk moth).